Here is a 105-residue protein sequence, read N- to C-terminus: Putative regulatory protein COPRO5265_1186 (105 aa).

The segment at 76 to 105 is disordered; sequence RLEEEEEEEERTEPITEQEAELEEESGEDV. Acidic residues predominate over residues 78 to 105; sequence EEEEEEEERTEPITEQEAELEEESGEDV.

It belongs to the RemA family.

This Coprothermobacter proteolyticus (strain ATCC 35245 / DSM 5265 / OCM 4 / BT) protein is Putative regulatory protein COPRO5265_1186.